A 568-amino-acid chain; its full sequence is Chaperonin homolog Hsp-60, mitochondrial (568 aa).

This sequence belongs to the chaperonin (HSP60) family.

The protein resides in the mitochondrion matrix. Its function is as follows. Implicated in mitochondrial protein import and macromolecular assembly. May facilitate the correct folding of imported proteins. May also prevent misfolding and promote the refolding and proper assembly of unfolded polypeptides generated under stress conditions in the mitochondrial matrix. The protein is Chaperonin homolog Hsp-60, mitochondrial (hsp-60) of Caenorhabditis elegans.